Reading from the N-terminus, the 284-residue chain is MVLMIVSGRSGSGKSVALRALEDMGFYCVDNLPVVLLPDLARTLAEREISAAVSIDVRNMPESPEIFEQAMTNLPEAFSPQLLFLDADRNTLIRRYSDTRRLHPLSSKNLSLESAIDKESDLLEPLRSRADLIVDTSEMSVHELAEMLRTRLLGKRERELTMVFESFGFKHGIPIDADYVFDVRFLPNPHWDPKLRPMTGLDKPVAAFLDRHTEVHNFIYQTRSYLELWLPMLETNNRSYLTVAIGCTGGKHRSVYIAEQLADYFRSRGKNVQSRHRTLEKRKT.

8–15 is a binding site for ATP; it reads GRSGSGKS. 56–59 serves as a coordination point for GTP; it reads DVRN. Residues 266-284 are RNA-binding; sequence RSRGKNVQSRHRTLEKRKT.

It belongs to the RapZ-like family. RapZ subfamily. As to quaternary structure, homotrimer.

Modulates the synthesis of GlmS, by affecting the processing and stability of the regulatory small RNA GlmZ. When glucosamine-6-phosphate (GlcN6P) concentrations are high in the cell, RapZ binds GlmZ and targets it to cleavage by RNase E. Consequently, GlmZ is inactivated and unable to activate GlmS synthesis. Under low GlcN6P concentrations, RapZ is sequestered and inactivated by an other regulatory small RNA, GlmY, preventing GlmZ degradation and leading to synthesis of GlmS. The sequence is that of RNase adapter protein RapZ from Escherichia fergusonii (strain ATCC 35469 / DSM 13698 / CCUG 18766 / IAM 14443 / JCM 21226 / LMG 7866 / NBRC 102419 / NCTC 12128 / CDC 0568-73).